Reading from the N-terminus, the 100-residue chain is Urease subunit gamma (100 aa).

Belongs to the urease gamma subunit family. Heterotrimer of UreA (gamma), UreB (beta) and UreC (alpha) subunits. Three heterotrimers associate to form the active enzyme.

The protein resides in the cytoplasm. It carries out the reaction urea + 2 H2O + H(+) = hydrogencarbonate + 2 NH4(+). Its pathway is nitrogen metabolism; urea degradation; CO(2) and NH(3) from urea (urease route): step 1/1. This Cupriavidus taiwanensis (strain DSM 17343 / BCRC 17206 / CCUG 44338 / CIP 107171 / LMG 19424 / R1) (Ralstonia taiwanensis (strain LMG 19424)) protein is Urease subunit gamma.